Here is a 102-residue protein sequence, read N- to C-terminus: NADH-quinone oxidoreductase subunit K (102 aa).

The next 3 helical transmembrane spans lie at 5 to 25 (LGHFLSLGAMLFALSVIGIFL), 31 to 51 (IVLLMAIELMLLAVNMNFVAF), and 62 to 82 (VFVFFILTVAAAESAIGLAIL).

Belongs to the complex I subunit 4L family. In terms of assembly, NDH-1 is composed of 14 different subunits. Subunits NuoA, H, J, K, L, M, N constitute the membrane sector of the complex.

It is found in the cell inner membrane. The enzyme catalyses a quinone + NADH + 5 H(+)(in) = a quinol + NAD(+) + 4 H(+)(out). NDH-1 shuttles electrons from NADH, via FMN and iron-sulfur (Fe-S) centers, to quinones in the respiratory chain. The immediate electron acceptor for the enzyme in this species is believed to be ubiquinone. Couples the redox reaction to proton translocation (for every two electrons transferred, four hydrogen ions are translocated across the cytoplasmic membrane), and thus conserves the redox energy in a proton gradient. This is NADH-quinone oxidoreductase subunit K from Paracidovorax citrulli (strain AAC00-1) (Acidovorax citrulli).